Here is a 486-residue protein sequence, read N- to C-terminus: Katanin p60 ATPase-containing subunit A1 (486 aa).

Residues 103–174 (RSSPLPVRRP…NKAEVSEKEV (72 aa)) form a disordered region. The span at 143–174 (NGDRAKPLKGKEKKEAKPKDDKNKAEVSEKEV) shows a compositional bias: basic and acidic residues. 244–251 (GPPGTGKT) contacts ATP.

The protein belongs to the AAA ATPase family. Katanin p60 subunit A1 subfamily. Can homooligomerize into hexameric rings, which may be promoted by interaction with microtubules. Interacts with katnb1, which may serve as a targeting subunit.

The protein resides in the cytoplasm. It is found in the cytoskeleton. The protein localises to the microtubule organizing center. Its subcellular location is the centrosome. It localises to the spindle pole. The protein resides in the spindle. It carries out the reaction n ATP + n H2O + a microtubule = n ADP + n phosphate + (n+1) alpha/beta tubulin heterodimers.. Its activity is regulated as follows. ATPase activity is stimulated by microtubules, which promote homooligomerization. ATP-dependent microtubule severing is stimulated by interaction with katnb1. In terms of biological role, catalytic subunit of a complex which severs microtubules in an ATP-dependent manner. Microtubule severing may promote rapid reorganization of cellular microtubule arrays and the release of microtubules from the centrosome following nucleation. In Salmo salar (Atlantic salmon), this protein is Katanin p60 ATPase-containing subunit A1 (katna1).